The sequence spans 203 residues: Pyridoxal 5'-phosphate synthase subunit PdxT (203 aa).

Residue 51–53 (GES) participates in L-glutamine binding. Catalysis depends on Cys-83, which acts as the Nucleophile. Residues Arg-110 and 137 to 138 (IR) each bind L-glutamine. Catalysis depends on charge relay system residues His-172 and Glu-174.

This sequence belongs to the glutaminase PdxT/SNO family. In terms of assembly, in the presence of PdxS, forms a dodecamer of heterodimers. Only shows activity in the heterodimer.

It catalyses the reaction aldehydo-D-ribose 5-phosphate + D-glyceraldehyde 3-phosphate + L-glutamine = pyridoxal 5'-phosphate + L-glutamate + phosphate + 3 H2O + H(+). The enzyme catalyses L-glutamine + H2O = L-glutamate + NH4(+). Its pathway is cofactor biosynthesis; pyridoxal 5'-phosphate biosynthesis. Functionally, catalyzes the hydrolysis of glutamine to glutamate and ammonia as part of the biosynthesis of pyridoxal 5'-phosphate. The resulting ammonia molecule is channeled to the active site of PdxS. The sequence is that of Pyridoxal 5'-phosphate synthase subunit PdxT from Thermoplasma acidophilum (strain ATCC 25905 / DSM 1728 / JCM 9062 / NBRC 15155 / AMRC-C165).